A 185-amino-acid chain; its full sequence is UPF0669 protein C6orf120 homolog (185 aa).

Positions 1-23 (MATPWRCALLMILASQVVILVKC) are cleaved as a signal peptide. Asn-47 is a glycosylation site (N-linked (GlcNAc...) asparagine).

The protein belongs to the UPF0669 family.

Its subcellular location is the secreted. Functionally, may be involved in induction of apoptosis in CD4(+) T-cells, but not CD8(+) T-cells or hepatocytes. The sequence is that of UPF0669 protein C6orf120 homolog from Rattus norvegicus (Rat).